The sequence spans 475 residues: Splicing factor U2AF 65 kDa subunit (475 aa).

The disordered stretch occupies residues 1–90 (MSDFDEFERQ…RHEKKKKVRK (90 aa)). Serine 2 bears the N-acetylserine mark. Position 2 is a phosphoserine (serine 2). The interval 2–93 (SDFDEFERQL…KKKKVRKYWD (92 aa)) is required for interaction with PRPF19. Positions 7–22 (FERQLNENKQERDKEN) are enriched in basic and acidic residues. 5-hydroxylysine; by JMJD6; alternate is present on lysine 15. Residue lysine 15 forms a Glycyl lysine isopeptide (Lys-Gly) (interchain with G-Cter in SUMO2); alternate linkage. The necessary and sufficient to stimulate pre-mRNAs 3'-end cleavage in a CFIm complex-dependent manner stretch occupies residues 17 to 47 (ERDKENRHRKRSHSRSRSRDRKRRSRSRDRR). Positions 23 to 46 (RHRKRSHSRSRSRDRKRRSRSRDR) are enriched in basic residues. Residues 47–56 (RNRDQRSASR) are compositionally biased toward basic and acidic residues. Residue lysine 70 forms a Glycyl lysine isopeptide (Lys-Gly) (interchain with G-Cter in SUMO2); alternate linkage. An N6-acetyllysine; alternate modification is found at lysine 70. Serine 79 is modified (phosphoserine). Over residues 79 to 89 (SPRHEKKKKVR) the composition is skewed to basic residues. RRM domains are found at residues 149 to 231 (RRLY…RPHD), 259 to 337 (HKLF…RASV), and 385 to 466 (LPEE…YCDP). Lysine 276 is subject to 5-hydroxylysine; by JMJD6. Serine 294 carries the phosphoserine modification.

This sequence belongs to the splicing factor SR family. Interacts with U2AF1L4. Heterodimer with U2AF1. Binds unphosphorylated SF1. Interacts with SCAF11 and SNW1. Interacts with ZRSR2/U2AF1-RS2. Interacts with RBM17. Interacts with PRPF19; the interaction is direct. Interacts with POLR2A (via the C-terminal domain); Interacts with PRPF19; the interaction is direct. Interacts with POLR2A (via the C-terminal domain); recruits PRPF19 and the Prp19 complex to the pre-mRNA. Interacts with KHDC4 (Isoform 2). Interacts with ZRSR2. Interacts with the SF3B complex composed of SF3B1, SF3B2, SF3B3, SF3B4, SF3B5, SF3B6 and PHF5A. Interacts (via N-terminus) with CPSF7 (via C-terminus); this interaction stimulates pre-mRNA 3'-end processing by promoting the recruitment of the CFIm complex to cleavage and polyadenylation signals. Interacts with ARGLU1; interaction may be involved in ARGLU1-mediated modulation of alternative splicing. Lysyl-hydroxylation at Lys-15 and Lys-276 affects the mRNA splicing activity of the protein, leading to regulate some, but not all, alternative splicing events.

The protein localises to the nucleus. In terms of biological role, plays a role in pre-mRNA splicing and 3'-end processing. By recruiting PRPF19 and the PRP19C/Prp19 complex/NTC/Nineteen complex to the RNA polymerase II C-terminal domain (CTD), and thereby pre-mRNA, may couple transcription to splicing. Required for the export of mRNA out of the nucleus, even if the mRNA is encoded by an intron-less gene. Positively regulates pre-mRNA 3'-end processing by recruiting the CFIm complex to cleavage and polyadenylation signals. The sequence is that of Splicing factor U2AF 65 kDa subunit (U2af2) from Mus musculus (Mouse).